Reading from the N-terminus, the 219-residue chain is Transmembrane protein 179B (219 aa).

Transmembrane regions (helical) follow at residues 9–29 (VELALFAAAFLCGAVAAAAMT), 65–85 (FVAGASGLLALYCLLLLLFWI), 96–116 (GAIGLRIALAISAIAVFLVLV), and 167–187 (TSSWVNLVLWCVVLVLQVVQW). Residues 198–219 (ERGDPEWSSETDALVGSRLSHS) are disordered. Phosphoserine is present on residues Ser206 and Ser214.

It belongs to the TMEM179 family.

It is found in the membrane. The polypeptide is Transmembrane protein 179B (TMEM179B) (Homo sapiens (Human)).